We begin with the raw amino-acid sequence, 464 residues long: Fumarate hydratase class II (464 aa).

Residues 98–100 (SGT), 129–132 (HPND), 139–141 (SSN), and Thr-187 contribute to the substrate site. The active-site Proton donor/acceptor is His-188. The active site involves Ser-318. Residues Ser-319 and 324–326 (KVN) each bind substrate.

Belongs to the class-II fumarase/aspartase family. Fumarase subfamily. In terms of assembly, homotetramer.

The protein localises to the cytoplasm. The catalysed reaction is (S)-malate = fumarate + H2O. Its pathway is carbohydrate metabolism; tricarboxylic acid cycle; (S)-malate from fumarate: step 1/1. Functionally, involved in the TCA cycle. Catalyzes the stereospecific interconversion of fumarate to L-malate. This chain is Fumarate hydratase class II, found in Wigglesworthia glossinidia brevipalpis.